A 444-amino-acid chain; its full sequence is MAERKYFGTDGVRGKVGSYPITPDFVLKLGWAAGKVLATQGTGKVLIGKDTRISGYMLESALEAGLAAAGLSAAFTGPMPTPAIAYLTRTFRSEAGIVISASHNPFYDNGIKFFSAQGTKLPDDVEEAIEAMLEQPMDCVESAKLGRASRINDAAGRYIEFCKSTFPAHLSLDKYKIVVDCANGATYHIAPNVMRELGAEVIEIGTQPDGMNINENCGATDIKALQNQVLETKADIGLAYDGDGDRLIMVDHFGNKVDGDQILFIIAREALRSGNLKGGVVGTLMSNMSLELALKQLGIPFVRANVGDRYVLEKMQEYNWILGGENSGHIIIADKNTTGDGVIASLAVLAAMVQHKLSLNELASAVKLFPQVLINVRFAGGANPLESDAVKAVATEVEKQLAGKGRILLRKSGTEPLIRVMVECEDAELAQLSAEKIAEAVRSN.

S102 (phosphoserine intermediate) is an active-site residue. Mg(2+)-binding residues include S102, D241, D243, and D245. The residue at position 102 (S102) is a Phosphoserine.

The protein belongs to the phosphohexose mutase family. Requires Mg(2+) as cofactor. Activated by phosphorylation.

It carries out the reaction alpha-D-glucosamine 1-phosphate = D-glucosamine 6-phosphate. Its function is as follows. Catalyzes the conversion of glucosamine-6-phosphate to glucosamine-1-phosphate. This chain is Phosphoglucosamine mutase, found in Histophilus somni (strain 2336) (Haemophilus somnus).